The sequence spans 150 residues: uncharacterized protein (150 aa).

This is an uncharacterized protein from Homo sapiens (Human).